We begin with the raw amino-acid sequence, 81 residues long: Sec-independent protein translocase protein TatA (81 aa).

The helical transmembrane segment at 1 to 21 (MGGISIWQLLIVALIVILLFG) threads the bilayer. The interval 34-81 (GAVKGFKNAMTPEDENKSLDDKEKDQTAATSQQAAEKQPETESKDKQA) is disordered. Basic and acidic residues-rich tracts occupy residues 47–59 (DENK…EKDQ) and 70–81 (KQPETESKDKQA).

It belongs to the TatA/E family. The Tat system comprises two distinct complexes: a TatABC complex, containing multiple copies of TatA, TatB and TatC subunits, and a separate TatA complex, containing only TatA subunits. Substrates initially bind to the TatABC complex, which probably triggers association of the separate TatA complex to form the active translocon.

The protein localises to the cell inner membrane. Part of the twin-arginine translocation (Tat) system that transports large folded proteins containing a characteristic twin-arginine motif in their signal peptide across membranes. TatA could form the protein-conducting channel of the Tat system. In Shewanella frigidimarina (strain NCIMB 400), this protein is Sec-independent protein translocase protein TatA.